The primary structure comprises 126 residues: Desulfoferrodoxin (126 aa).

The Fe cation site is built by Cys-10, Cys-13, Cys-29, Cys-30, His-49, His-69, His-75, Cys-116, and His-119.

The protein belongs to the desulfoferrodoxin family. As to quaternary structure, homodimer. Fe(3+) is required as a cofactor. The cofactor is Cu(2+).

The enzyme catalyses reduced [rubredoxin] + superoxide + 2 H(+) = oxidized [rubredoxin] + H2O2. Catalyzes the one-electron reduction of superoxide anion radical to hydrogen peroxide at a nonheme ferrous iron center. Plays a fundamental role in case of oxidative stress via its superoxide detoxification activity. This Nitratidesulfovibrio vulgaris (strain ATCC 29579 / DSM 644 / CCUG 34227 / NCIMB 8303 / VKM B-1760 / Hildenborough) (Desulfovibrio vulgaris) protein is Desulfoferrodoxin (dfx).